Reading from the N-terminus, the 486-residue chain is Cardiolipin synthase A (486 aa).

2 helical membrane-spanning segments follow: residues isoleucine 3–isoleucine 23 and methionine 38–phenylalanine 58. 2 PLD phosphodiesterase domains span residues valine 219–tyrosine 246 and glutamine 399–serine 426. Catalysis depends on residues histidine 224, lysine 226, aspartate 231, histidine 404, lysine 406, and aspartate 411.

It belongs to the phospholipase D family. Cardiolipin synthase subfamily. ClsA sub-subfamily.

It localises to the cell inner membrane. It carries out the reaction 2 a 1,2-diacyl-sn-glycero-3-phospho-(1'-sn-glycerol) = a cardiolipin + glycerol. Functionally, catalyzes the reversible phosphatidyl group transfer from one phosphatidylglycerol molecule to another to form cardiolipin (CL) (diphosphatidylglycerol) and glycerol. This chain is Cardiolipin synthase A, found in Buchnera aphidicola subsp. Acyrthosiphon pisum (strain APS) (Acyrthosiphon pisum symbiotic bacterium).